The sequence spans 186 residues: Probable nicotinate-nucleotide adenylyltransferase (186 aa).

The protein belongs to the NadD family.

The enzyme catalyses nicotinate beta-D-ribonucleotide + ATP + H(+) = deamido-NAD(+) + diphosphate. Its pathway is cofactor biosynthesis; NAD(+) biosynthesis; deamido-NAD(+) from nicotinate D-ribonucleotide: step 1/1. Functionally, catalyzes the reversible adenylation of nicotinate mononucleotide (NaMN) to nicotinic acid adenine dinucleotide (NaAD). This is Probable nicotinate-nucleotide adenylyltransferase from Thermus thermophilus (strain ATCC BAA-163 / DSM 7039 / HB27).